We begin with the raw amino-acid sequence, 128 residues long: uncharacterized protein (128 aa).

Helical transmembrane passes span 5 to 25, 27 to 47, 60 to 80, and 87 to 107; these read ILALLIWSSSLIVGKLTYSMM, PVLVVQVRLIIAMIIVMPLFL, QLWWLAFFNYTAVFLLQFIGL, and SAVTMIGLEPLLVVFVGHFFF. An EamA domain is found at 9 to 110; the sequence is LIWSSSLIVG…FVGHFFFKTK (102 aa).

It localises to the cell membrane. This is an uncharacterized protein from Haemophilus influenzae (strain ATCC 51907 / DSM 11121 / KW20 / Rd).